The primary structure comprises 244 residues: L-xylulose reductase (244 aa).

Methionine 1 is subject to N-acetylmethionine. Leucine 11–arginine 39 lines the NADP(+) pocket. Residue arginine 21 is modified to Omega-N-methylarginine. Serine 136 is a substrate binding site. The Proton acceptor role is filled by tyrosine 149. The active site involves lysine 153.

The protein belongs to the short-chain dehydrogenases/reductases (SDR) family. As to quaternary structure, homotetramer. As to expression, highly expressed in kidney, liver and epididymis. Expressed at intermediate level in lung. Weakly or not expressed in brain, heart, spleen and testis.

The protein resides in the membrane. Its subcellular location is the apical cell membrane. It catalyses the reaction xylitol + NADP(+) = L-xylulose + NADPH + H(+). Its function is as follows. Catalyzes the NADPH-dependent reduction of several pentoses, tetroses, trioses, alpha-dicarbonyl compounds and L-xylulose. Participates in the uronate cycle of glucose metabolism. May play a role in the water absorption and cellular osmoregulation in the proximal renal tubules by producing xylitol, an osmolyte, thereby preventing osmolytic stress from occurring in the renal tubules. This is L-xylulose reductase (Dcxr) from Mus musculus (Mouse).